Here is a 504-residue protein sequence, read N- to C-terminus: UDP-N-acetylmuramoylalanine--D-glutamate ligase (504 aa).

ATP is bound at residue 129–135 (GTNGKTT).

Belongs to the MurCDEF family.

Its subcellular location is the cytoplasm. The catalysed reaction is UDP-N-acetyl-alpha-D-muramoyl-L-alanine + D-glutamate + ATP = UDP-N-acetyl-alpha-D-muramoyl-L-alanyl-D-glutamate + ADP + phosphate + H(+). It participates in cell wall biogenesis; peptidoglycan biosynthesis. Functionally, cell wall formation. Catalyzes the addition of glutamate to the nucleotide precursor UDP-N-acetylmuramoyl-L-alanine (UMA). This chain is UDP-N-acetylmuramoylalanine--D-glutamate ligase, found in Cupriavidus metallidurans (strain ATCC 43123 / DSM 2839 / NBRC 102507 / CH34) (Ralstonia metallidurans).